Consider the following 107-residue polypeptide: Iron-binding protein IscA (107 aa).

Positions 35, 99, and 101 each coordinate Fe cation.

Belongs to the HesB/IscA family. As to quaternary structure, homodimer; may form tetramers and higher multimers. The cofactor is Fe cation.

In terms of biological role, is able to transfer iron-sulfur clusters to apo-ferredoxin. Multiple cycles of [2Fe2S] cluster formation and transfer are observed, suggesting that IscA acts catalytically. Recruits intracellular free iron so as to provide iron for the assembly of transient iron-sulfur cluster in IscU in the presence of IscS, L-cysteine and the thioredoxin reductase system TrxA/TrxB. This Xenorhabdus nematophila (strain ATCC 19061 / DSM 3370 / CCUG 14189 / LMG 1036 / NCIMB 9965 / AN6) protein is Iron-binding protein IscA.